Here is a 108-residue protein sequence, read N- to C-terminus: MLKTTLLFFVTALCEIIGCFLPWLWLKRGASMWWLLPAAASLALFVWLLTLHPAASGRVYAAYGGVYVCTALLWLRVVDGVRLTVYDWCGALIALCGMLIIVVGWGRT.

The Periplasmic segment spans residues 1-5 (MLKTT). A helical membrane pass occupies residues 6–26 (LLFFVTALCEIIGCFLPWLWL). At 27–30 (KRGA) the chain is on the cytoplasmic side. Residues 31 to 51 (SMWWLLPAAASLALFVWLLTL) form a helical membrane-spanning segment. Residues 52–60 (HPAASGRVY) lie on the Periplasmic side of the membrane. A helical transmembrane segment spans residues 61 to 81 (AAYGGVYVCTALLWLRVVDGV). The Cytoplasmic portion of the chain corresponds to 82 to 84 (RLT). Residues 85-105 (VYDWCGALIALCGMLIIVVGW) traverse the membrane as a helical segment. The Periplasmic segment spans residues 106-108 (GRT).

It belongs to the UPF0060 family.

The protein resides in the cell inner membrane. The protein is UPF0060 membrane protein YnfA of Salmonella schwarzengrund (strain CVM19633).